We begin with the raw amino-acid sequence, 443 residues long: Xaa-Pro dipeptidase (443 aa).

Residues D246, D257, H339, E384, and E423 each coordinate Mn(2+).

The protein belongs to the peptidase M24B family. Bacterial-type prolidase subfamily. It depends on Mn(2+) as a cofactor.

The catalysed reaction is Xaa-L-Pro dipeptide + H2O = an L-alpha-amino acid + L-proline. Its function is as follows. Splits dipeptides with a prolyl residue in the C-terminal position. The chain is Xaa-Pro dipeptidase from Klebsiella pneumoniae (strain 342).